Reading from the N-terminus, the 528-residue chain is Membrane protein insertase YidC (528 aa).

5 consecutive transmembrane segments (helical) span residues 13–33 (ILLA…FFIP), 336–356 (WGWA…PLTY), 406–426 (LPIL…LNAI), 446–466 (YFIL…ITPM), and 481–501 (PVIF…YWFV).

Belongs to the OXA1/ALB3/YidC family. Type 1 subfamily. In terms of assembly, interacts with the Sec translocase complex via SecD. Specifically interacts with transmembrane segments of nascent integral membrane proteins during membrane integration.

It localises to the cell inner membrane. In terms of biological role, required for the insertion and/or proper folding and/or complex formation of integral membrane proteins into the membrane. Involved in integration of membrane proteins that insert both dependently and independently of the Sec translocase complex, as well as at least some lipoproteins. Aids folding of multispanning membrane proteins. The sequence is that of Membrane protein insertase YidC from Campylobacter jejuni subsp. jejuni serotype O:2 (strain ATCC 700819 / NCTC 11168).